Here is a 338-residue protein sequence, read N- to C-terminus: Ferrochelatase (338 aa).

Residues His-207 and Glu-293 each contribute to the Fe cation site.

It belongs to the ferrochelatase family.

It localises to the cytoplasm. The catalysed reaction is heme b + 2 H(+) = protoporphyrin IX + Fe(2+). The protein operates within porphyrin-containing compound metabolism; protoheme biosynthesis; protoheme from protoporphyrin-IX: step 1/1. Catalyzes the ferrous insertion into protoporphyrin IX. This is Ferrochelatase from Shewanella denitrificans (strain OS217 / ATCC BAA-1090 / DSM 15013).